Consider the following 78-residue polypeptide: uncharacterized protein (78 aa).

Positions 49–78 (QRASLERSNSIRNLQSQGKRRSDSKESRKL) are disordered. Positions 54-65 (ERSNSIRNLQSQ) are enriched in polar residues. The segment covering 68-78 (RRSDSKESRKL) has biased composition (basic and acidic residues).

This is an uncharacterized protein from Saccharomyces cerevisiae (strain ATCC 204508 / S288c) (Baker's yeast).